The chain runs to 738 residues: MRRSLAPSQVAKRKQGPDSDDEEDWEPDMEPQCKRDCREKYISPYRKPLTPLTNRPFCADGNEHEAFIRKILSKPFKIPIPNYTGVLGLRALGLRRAGVRKALHDPFEDGALVLYEPPVISAHDLIKADKEKLPVHVVVDPVLSKVLRPHQREGVKFLWDCVTGRRIENSYGCIMADEMGLGKTLQCITLIWTLLKQSPDCKPEIDKVIVVSPSSLVRNWYNEVGKWLGGRVQPVAIDGGSKDEIDSKLVNFISQQGMRIPTPILIISYETFRLHAEVLHKGKVGLVICDEGHRLKNSDNQTYLALNSMNAQRRVLISGTPIQNDLLEYFSLVHFVNSGILGTAQEFKKRFEIPILKGRDADASDKDRAAGEQKLQELISIVNRCLIRRTSDILSKYLPVKIEQVVCCNLTPLQKELYKLFLKQAKPVESLQTGKISVSSLSSITSLKKLCNHPALIYEKCLTGEEGFDGALDLFPQNYSTKAVEPQLSGKMLVLDYILAMTRTTTSDKVVLVSNYTQTLDLFEKLCRNRRYLYVRLDGTMSIKKRAKIVERFNNPSSPEFIFMLSSKAGGCGLNLIGANRLVMFDPDWNPANDEQAMARVWRDGQKKTCYIYRLLSTGTIEEKILQRQAHKKALSSCVVDEEQDVERHFSLGELRELFSLNEKTLSDTHDRFRCRRCVNGRQVRPPPDDSDCTCDLSNWHHCADKRGLRDPVLQASWDAAVSFVFHQRSHEDQRGVV.

The segment at 1–31 (MRRSLAPSQVAKRKQGPDSDDEEDWEPDMEP) is disordered. Residues 18–29 (DSDDEEDWEPDM) show a composition bias toward acidic residues. One can recognise a Helicase ATP-binding domain in the interval 164–339 (GRRIENSYGC…FSLVHFVNSG (176 aa)). 177–184 (DEMGLGKT) is a binding site for ATP. Residues 290–293 (DEGH) carry the DEAH box motif. The region spanning 493–647 (LVLDYILAMT…CVVDEEQDVE (155 aa)) is the Helicase C-terminal domain. S566 and S567 each carry phosphoserine.

In terms of assembly, homohexamer. Interacts with RAD51. Post-translationally, phosphorylated. Phosphorylations at Ser-566 and Ser-567 allow efficient removal of RAD51 filaments from DNA.

The enzyme catalyses ATP + H2O = ADP + phosphate + H(+). Functionally, plays an essential role in homologous recombination (HR) which is a major pathway for repairing DNA double-strand breaks (DSBs), single-stranded DNA (ssDNA) gaps, and stalled or collapsed replication forks. Acts as a molecular motor during the homology search and guides RAD51 ssDNA along a donor dsDNA thereby changing the homology search from the diffusion-based mechanism to a motor-guided mechanism. Also plays an essential role in RAD51-mediated synaptic complex formation which consists of three strands encased in a protein filament formed once homology is recognized. Once DNA strand exchange occured, dissociates RAD51 from nucleoprotein filaments formed on dsDNA. In Danio rerio (Zebrafish), this protein is DNA repair and recombination protein RAD54-like (rad54l).